The primary structure comprises 228 residues: MFEKKLFFVSCQALKGEALYGKDIVVKLAKAAIQGGAQGLRTSQIKNIKALIRANFNVPIIGIIKQNYPNSDVYISPTLKEMKKLIKTGVQIIAIDATLRKRPKESLNQIVDYFFKHKKSHQLLMADCSSIEDVNNAIKLNFDIIGTTLRGYTEDTKNFSNTDDNYLFLRQVLKICQQNKKYLIAEGGFNSPQNAKDALDIGANAVVVGSAITRPQFITKMFYEKINS.

Belongs to the NanE family.

It catalyses the reaction an N-acyl-D-glucosamine 6-phosphate = an N-acyl-D-mannosamine 6-phosphate. The protein operates within amino-sugar metabolism; N-acetylneuraminate degradation; D-fructose 6-phosphate from N-acetylneuraminate: step 3/5. In terms of biological role, converts N-acetylmannosamine-6-phosphate (ManNAc-6-P) to N-acetylglucosamine-6-phosphate (GlcNAc-6-P). The polypeptide is Putative N-acetylmannosamine-6-phosphate 2-epimerase (Mycoplasmopsis pulmonis (strain UAB CTIP) (Mycoplasma pulmonis)).